A 488-amino-acid polypeptide reads, in one-letter code: Probable glycine dehydrogenase (decarboxylating) subunit 2 (488 aa).

An N6-(pyridoxal phosphate)lysine modification is found at Lys274.

Belongs to the GcvP family. C-terminal subunit subfamily. The glycine cleavage system is composed of four proteins: P, T, L and H. In this organism, the P 'protein' is a heterodimer of two subunits. It depends on pyridoxal 5'-phosphate as a cofactor.

The enzyme catalyses N(6)-[(R)-lipoyl]-L-lysyl-[glycine-cleavage complex H protein] + glycine + H(+) = N(6)-[(R)-S(8)-aminomethyldihydrolipoyl]-L-lysyl-[glycine-cleavage complex H protein] + CO2. The glycine cleavage system catalyzes the degradation of glycine. The P protein binds the alpha-amino group of glycine through its pyridoxal phosphate cofactor; CO(2) is released and the remaining methylamine moiety is then transferred to the lipoamide cofactor of the H protein. In Listeria monocytogenes serovar 1/2a (strain ATCC BAA-679 / EGD-e), this protein is Probable glycine dehydrogenase (decarboxylating) subunit 2.